The primary structure comprises 389 residues: Nucleic acid dioxygenase ALKBH1 (389 aa).

Positions 86–389 (SKWQAYGLKG…VKRARINPDS (304 aa)) are tRNA-binding. Substrate contacts are provided by residues Trp144 and 175–177 (YHY). The Fe2OG dioxygenase domain occupies 208–347 (GFEDFRAEAG…RVNMTVRQVL (140 aa)). 220 to 222 (NYY) contacts 2-oxoglutarate. Fe cation-binding residues include His231, Asp233, and His287. Position 233 (Asp233) interacts with substrate. 338 to 344 (RVNMTVR) contributes to the 2-oxoglutarate binding site.

This sequence belongs to the alkB family. Monomer. Interacts with DNAJB6. Fe(2+) serves as cofactor. In terms of tissue distribution, ubiquitous.

Its subcellular location is the nucleus. The protein localises to the mitochondrion. The enzyme catalyses 2'-deoxyribonucleotide-(2'-deoxyribose 5'-phosphate)-2'-deoxyribonucleotide-DNA = a 3'-end 2'-deoxyribonucleotide-(2,3-dehydro-2,3-deoxyribose 5'-phosphate)-DNA + a 5'-end 5'-phospho-2'-deoxyribonucleoside-DNA + H(+). It catalyses the reaction a methylated nucleobase within DNA + 2-oxoglutarate + O2 = a nucleobase within DNA + formaldehyde + succinate + CO2. It carries out the reaction an N(6)-methyl-2'-deoxyadenosine in DNA + 2-oxoglutarate + O2 = a 2'-deoxyadenosine in DNA + formaldehyde + succinate + CO2. The catalysed reaction is an N(1)-methyladenosine in tRNA + 2-oxoglutarate + O2 = an adenosine in tRNA + formaldehyde + succinate + CO2. The enzyme catalyses 5-methylcytidine(34) in mitochondrial tRNA(Met) + 2 2-oxoglutarate + 2 O2 = 5-formylcytidine(34) in mitochondrial tRNA(Met) + 2 succinate + 2 CO2 + H2O. It catalyses the reaction an N(3)-methylcytidine in mRNA + 2-oxoglutarate + O2 = a cytidine in mRNA + formaldehyde + succinate + CO2. It carries out the reaction N(1)-methyladenosine(58) in tRNA + 2-oxoglutarate + O2 = adenosine(58) in tRNA + formaldehyde + succinate + CO2. In terms of biological role, dioxygenase that acts on nucleic acids, such as DNA and tRNA. Requires molecular oxygen, alpha-ketoglutarate and iron. A number of activities have been described for this dioxygenase, but recent results suggest that it mainly acts on tRNAs and mediates their demethylation or oxidation depending on the context and subcellular compartment. Mainly acts as a tRNA demethylase by removing N(1)-methyladenine from various tRNAs, with a preference for N(1)-methyladenine at position 58 (m1A58) present on a stem loop structure of tRNAs. Acts as a regulator of translation initiation and elongation in response to glucose deprivation: regulates both translation initiation, by mediating demethylation of tRNA(Met), and translation elongation, N(1)-methyladenine-containing tRNAs being preferentially recruited to polysomes to promote translation elongation. In mitochondrion, specifically interacts with mt-tRNA(Met) and mediates oxidation of mt-tRNA(Met) methylated at cytosine(34) to form 5-formylcytosine (f(5)c) at this position. mt-tRNA(Met) containing the f(5)c modification at the wobble position enables recognition of the AUA codon in addition to the AUG codon, expanding codon recognition in mitochondrial translation. Specifically demethylates DNA methylated on the 6th position of adenine (N(6)-methyladenosine) DNA. N(6)-methyladenosine (m6A) DNA is present at some L1 elements in embryonic stem cells and probably promotes their silencing. Demethylates mRNAs containing N(3)-methylcytidine modification. Also able to repair alkylated single-stranded DNA by oxidative demethylation, but with low activity. Also has DNA lyase activity and introduces double-stranded breaks at abasic sites: cleaves both single-stranded DNA and double-stranded DNA at abasic sites, with the greatest activity towards double-stranded DNA with two abasic sites. DNA lyase activity does not require alpha-ketoglutarate and iron and leads to the formation of an irreversible covalent protein-DNA adduct with the 5' DNA product. DNA lyase activity is not required during base excision repair and class switch recombination of the immunoglobulin heavy chain during B lymphocyte activation. May play a role in placental trophoblast lineage differentiation. In Homo sapiens (Human), this protein is Nucleic acid dioxygenase ALKBH1.